A 303-amino-acid chain; its full sequence is Probable RuBisCO transcriptional regulator (303 aa).

The 58-residue stretch at 6–63 folds into the HTH lysR-type domain; sequence FTLDQLRIFQAIVVEGSFQKAAQSLYISQPAVSLQIQNLEQQLNAPLFDRSHRKAKLT. A DNA-binding region (H-T-H motif) is located at residues 23–42; sequence FQKAAQSLYISQPAVSLQIQ.

Belongs to the LysR transcriptional regulatory family.

The protein localises to the plastid. It is found in the chloroplast. Functionally, trans-acting transcriptional regulator of RuBisCO genes (rbcL and rbcS) expression. This Cyanidioschyzon merolae (strain NIES-3377 / 10D) (Unicellular red alga) protein is Probable RuBisCO transcriptional regulator (rbcR).